A 205-amino-acid polypeptide reads, in one-letter code: uncharacterized protein (205 aa).

The protein belongs to the peptidase C56 family.

This is an uncharacterized protein from Methanocaldococcus jannaschii (strain ATCC 43067 / DSM 2661 / JAL-1 / JCM 10045 / NBRC 100440) (Methanococcus jannaschii).